We begin with the raw amino-acid sequence, 319 residues long: Taste receptor type 2 member 39 (319 aa).

The Extracellular portion of the chain corresponds to 1–16 (MAQPSNYWKQDVLPLS). Residues 17 to 37 (ILMLTLVATECTIGIIASGIV) form a helical membrane-spanning segment. Residues 38-65 (MAVNAVSWVQKKAISITTRILLLLSVSR) are Cytoplasmic-facing. The helical transmembrane segment at 66-86 (IGLQSIMLIEITSSIFNVAFY) threads the bilayer. At 87 to 97 (NSVLYRVSNVS) the chain is on the extracellular side. Asn95 carries an N-linked (GlcNAc...) asparagine glycan. A helical membrane pass occupies residues 98-118 (FVFLNYCSLWFAALLSFFHFV). Over 119–137 (KIANFSYPLFFKLKWRISE) the chain is Cytoplasmic. Residues 138–158 (LMPWLLWLSVFISFSSSMFFS) traverse the membrane as a helical segment. The Extracellular segment spans residues 159–194 (KHKFTVNNNNSLSNNICNFTMKLYVVETNVVNVSFL). Residues Asn167, Asn176, and Asn190 are each glycosylated (N-linked (GlcNAc...) asparagine). The helical transmembrane segment at 195-215 (FISGILPPLTMFVATATLLIF) threads the bilayer. Residues 216–247 (SLRRHTLNMRNSATGSRNPCIEAHMQAIKETS) are Cytoplasmic-facing. Residues 248 to 268 (CFLFLYILNAAALLLSTSNIV) traverse the membrane as a helical segment. The Extracellular portion of the chain corresponds to 269–273 (DASLF). Residues 274 to 294 (WSIVIRIVLPVYPAGHSVLLI) form a helical membrane-spanning segment. Residues 295–319 (QNNPGLRRTWKHLQSQIHLYLQNRF) are Cytoplasmic-facing.

The protein belongs to the G-protein coupled receptor T2R family.

The protein resides in the membrane. In terms of biological role, putative taste receptor which may play a role in the perception of bitterness. The chain is Taste receptor type 2 member 39 (Tas2r39) from Mus musculus (Mouse).